Reading from the N-terminus, the 357-residue chain is DNA replication and repair protein RecF (357 aa).

30–37 (GANGSGKT) lines the ATP pocket.

The protein belongs to the RecF family.

The protein resides in the cytoplasm. Functionally, the RecF protein is involved in DNA metabolism; it is required for DNA replication and normal SOS inducibility. RecF binds preferentially to single-stranded, linear DNA. It also seems to bind ATP. The sequence is that of DNA replication and repair protein RecF from Escherichia fergusonii (strain ATCC 35469 / DSM 13698 / CCUG 18766 / IAM 14443 / JCM 21226 / LMG 7866 / NBRC 102419 / NCTC 12128 / CDC 0568-73).